Consider the following 265-residue polypeptide: Glutamate racemase (265 aa).

Substrate-binding positions include 12 to 13 (DS) and 44 to 45 (YG). Catalysis depends on Cys-75, which acts as the Proton donor/acceptor. Position 76–77 (76–77 (NT)) interacts with substrate. The Proton donor/acceptor role is filled by Cys-186. Substrate is bound at residue 187-188 (TH).

It belongs to the aspartate/glutamate racemases family.

It catalyses the reaction L-glutamate = D-glutamate. Its pathway is cell wall biogenesis; peptidoglycan biosynthesis. In terms of biological role, provides the (R)-glutamate required for cell wall biosynthesis. The sequence is that of Glutamate racemase from Pseudomonas putida (strain W619).